A 455-amino-acid chain; its full sequence is Ribulose bisphosphate carboxylase large chain (455 aa).

Position 5 is an N6,N6,N6-trimethyllysine (Lys5). The substrate site is built by Asn114 and Thr164. The active-site Proton acceptor is the Lys166. Substrate is bound at residue Lys168. Mg(2+) is bound by residues Lys192, Asp194, and Glu195. The residue at position 192 (Lys192) is an N6-carboxylysine. His285 (proton acceptor) is an active-site residue. Substrate-binding residues include Arg286, His318, and Ser370.

It belongs to the RuBisCO large chain family. Type I subfamily. In terms of assembly, heterohexadecamer of 8 large chains and 8 small chains; disulfide-linked. The disulfide link is formed within the large subunit homodimers. Mg(2+) is required as a cofactor. In terms of processing, the disulfide bond which can form in the large chain dimeric partners within the hexadecamer appears to be associated with oxidative stress and protein turnover.

The protein localises to the plastid. Its subcellular location is the chloroplast. It carries out the reaction 2 (2R)-3-phosphoglycerate + 2 H(+) = D-ribulose 1,5-bisphosphate + CO2 + H2O. It catalyses the reaction D-ribulose 1,5-bisphosphate + O2 = 2-phosphoglycolate + (2R)-3-phosphoglycerate + 2 H(+). In terms of biological role, ruBisCO catalyzes two reactions: the carboxylation of D-ribulose 1,5-bisphosphate, the primary event in carbon dioxide fixation, as well as the oxidative fragmentation of the pentose substrate in the photorespiration process. Both reactions occur simultaneously and in competition at the same active site. This is Ribulose bisphosphate carboxylase large chain from Lupinus paraguariensis (Lupine).